Here is a 300-residue protein sequence, read N- to C-terminus: Diphthine methyl ester synthase (300 aa).

Residues Leu-9, Asp-85, Gly-88, 113–114 (SV), Leu-164, Leu-222, and His-247 contribute to the S-adenosyl-L-methionine site.

It belongs to the diphthine synthase family.

The protein localises to the cytoplasm. It catalyses the reaction 2-[(3S)-amino-3-carboxypropyl]-L-histidyl-[translation elongation factor 2] + 4 S-adenosyl-L-methionine = diphthine methyl ester-[translation elongation factor 2] + 4 S-adenosyl-L-homocysteine + 3 H(+). It participates in protein modification; peptidyl-diphthamide biosynthesis. Its function is as follows. S-adenosyl-L-methionine-dependent methyltransferase that catalyzes four methylations of the modified target histidine residue in translation elongation factor 2 (EF-2), to form an intermediate called diphthine methyl ester. The four successive methylation reactions represent the second step of diphthamide biosynthesis. In Yarrowia lipolytica (strain CLIB 122 / E 150) (Yeast), this protein is Diphthine methyl ester synthase (DPH5).